Reading from the N-terminus, the 610-residue chain is Isocitrate dehydrogenase kinase/phosphatase (610 aa).

Residues 359-365 and Lys-380 contribute to the ATP site; that span reads APGFKGT. The active site involves Asp-419.

Belongs to the AceK family.

It localises to the cytoplasm. The enzyme catalyses L-seryl-[isocitrate dehydrogenase] + ATP = O-phospho-L-seryl-[isocitrate dehydrogenase] + ADP + H(+). Its function is as follows. Bifunctional enzyme which can phosphorylate or dephosphorylate isocitrate dehydrogenase (IDH) on a specific serine residue. This is a regulatory mechanism which enables bacteria to bypass the Krebs cycle via the glyoxylate shunt in response to the source of carbon. When bacteria are grown on glucose, IDH is fully active and unphosphorylated, but when grown on acetate or ethanol, the activity of IDH declines drastically concomitant with its phosphorylation. This is Isocitrate dehydrogenase kinase/phosphatase from Rhodopseudomonas palustris (strain ATCC BAA-98 / CGA009).